Here is a 345-residue protein sequence, read N- to C-terminus: Heat-inducible transcription repressor HrcA (345 aa).

It belongs to the HrcA family.

Functionally, negative regulator of class I heat shock genes (grpE-dnaK-dnaJ and groELS operons). Prevents heat-shock induction of these operons. The chain is Heat-inducible transcription repressor HrcA from Listeria welshimeri serovar 6b (strain ATCC 35897 / DSM 20650 / CCUG 15529 / CIP 8149 / NCTC 11857 / SLCC 5334 / V8).